A 1209-amino-acid polypeptide reads, in one-letter code: Neural cell adhesion molecule L1-like protein (1209 aa).

Residues 1-25 (MMELPLCGRGLILSLIFLLLKLSAA) form the signal peptide. Over 26–1083 (EIPLSVQQVP…LYDDISTQGW (1058 aa)) the chain is Extracellular. Ig-like C2-type domains follow at residues 35–124 (PTIV…EEIE) and 128–223 (PGVP…MKLT). Cystine bridges form between C57/C109 and C153/C204. N-linked (GlcNAc...) asparagine glycosylation occurs at N87. N225 and N299 each carry an N-linked (GlcNAc...) asparagine glycan. 4 Ig-like C2-type domains span residues 235-328 (PKLL…VTVE), 331-417 (PRWK…ANID), 423-510 (PLIK…ANLD), and 515-607 (TKLR…TQVT). 4 disulfides stabilise this stretch: C262–C310, C352–C401, C445–C494, and C536–C591. An N-linked (GlcNAc...) asparagine glycan is attached at N476. The short motif at 555–558 (DGEA) is the DGEA element. N562 and N580 each carry an N-linked (GlcNAc...) asparagine glycan. Fibronectin type-III domains are found at residues 614–709 (PPGN…TPPA), 714–807 (NPQN…SGED), 812–914 (APVI…TPEG), and 918–1015 (QPSF…LGEG). Residues 696-717 (HASLPSDHHETPPAAPDKNPQN) form a disordered region. N-linked (GlcNAc...) asparagine glycosylation is found at N767, N822, N945, and N1027. Residues 1084–1104 (FIGLMCAIALLTLILLTICFV) traverse the membrane as a helical segment. Residues 1105–1209 (KRNRGGKYSV…SSTATFPLRA (105 aa)) are Cytoplasmic-facing. The span at 1115 to 1133 (KEKEDLHPDPEVQSAKDET) shows a compositional bias: basic and acidic residues. Residues 1115–1170 (KEKEDLHPDPEVQSAKDETFGEYSDSDEKPLKGSLRSLNRNMQPTESADSLVEYGE) are disordered. Residues S1148, S1161, and S1181 each carry the phosphoserine modification. Positions 1150–1162 (RSLNRNMQPTESA) are enriched in polar residues. Residues 1182 to 1186 (FIGAY) carry the FIG[AQ]Y motif.

Belongs to the immunoglobulin superfamily. L1/neurofascin/NgCAM family. May interact with L1CAM. May interact with ITGB1/ITGA1 heterodimer and ITGB1/ITGA2 heterodimer as well as with ANK3. Cleavage by metalloprotease ADAM8 in the extracellular part generates 2 soluble forms (125 kDa and 165 kDa) in vitro and is inhibited by metalloprotease inhibitors. In brain extracts, these two soluble forms are also present and are dramatically reduced in mice lacking ADAM8. Cleaved by BACE1. In terms of processing, N-glycosylated. Contains N-linked oligosaccharides with a sulfated carbohydrate structure type HNK-1 (SO4-3-GlcUABeta1,3GalBeta1,4GlcNAc). Post-translationally, O-glycosylated. As to expression, expressed in the brain, in the cerebellum and in the spinal cord. Detected in the retina and the optic nerve. Expressed in neurons and glial cells in the central nervous system and by Schwann cells in the peripheral nervous system.

The protein localises to the cell membrane. It is found in the secreted. Its subcellular location is the extracellular space. It localises to the extracellular matrix. Extracellular matrix and cell adhesion protein that plays a role in nervous system development and in synaptic plasticity. Both soluble and membranous forms promote neurite outgrowth of cerebellar and hippocampal neurons and suppress neuronal cell death. Plays a role in neuronal positioning of pyramidal neurons as well as in regulation of both the number of interneurons and the efficacy of GABAergic synapses. May play a role in regulating cell migration in nerve regeneration and cortical development. Potentiates integrin-dependent cell migration towards extracellular matrix proteins. Recruits ANK3 to the plasma membrane. This Mus musculus (Mouse) protein is Neural cell adhesion molecule L1-like protein (Chl1).